The sequence spans 564 residues: Mitochondrial distribution and morphology protein 34-1 (564 aa).

One can recognise an SMP-LTD domain in the interval 1-195; it reads MAFKFNWSPL…LPAIIHRLSL (195 aa). Polar residues-rich tracts occupy residues 297-322 and 329-352; these read PDQN…SQTG and DNAS…SSYG. 3 disordered regions span residues 297–408, 414–433, and 452–473; these read PDQN…VTSA, HEQP…DQSL, and DLSS…PFNT. Basic residues predominate over residues 359–371; that stretch reads RHSRAHARRRKKR. The span at 383–394 shows a compositional bias: low complexity; sequence SDSASVSVSDES. Positions 396 to 408 are enriched in polar residues; the sequence is YTESASAPSVTSA. Over residues 452-466 the composition is skewed to basic and acidic residues; the sequence is DLSSEIVRDRAEPSE.

Belongs to the MDM34 family. Component of the ER-mitochondria encounter structure (ERMES) or MDM complex, composed of mmm1, mdm10, mdm12 and mdm34.

The protein localises to the mitochondrion outer membrane. Functionally, component of the ERMES/MDM complex, which serves as a molecular tether to connect the endoplasmic reticulum (ER) and mitochondria. Components of this complex are involved in the control of mitochondrial shape and protein biogenesis, and function in nonvesicular lipid trafficking between the ER and mitochondria. Mdm34 is required for the interaction of the ER-resident membrane protein mmm1 and the outer mitochondrial membrane-resident beta-barrel protein mdm10. The polypeptide is Mitochondrial distribution and morphology protein 34-1 (Penicillium rubens (strain ATCC 28089 / DSM 1075 / NRRL 1951 / Wisconsin 54-1255) (Penicillium chrysogenum)).